The chain runs to 520 residues: Tubby-related protein 2 (520 aa).

Residues Ser-135 and Ser-190 each carry the phosphoserine modification. The disordered stretch occupies residues 141-236 (EVSVENGSVS…GTNSSAAHNE (96 aa)). Over residues 211 to 223 (QKEEDLEKKREAS) the composition is skewed to basic and acidic residues. A compositionally biased stretch (polar residues) spans 224 to 233 (ESTGTNSSAA).

Belongs to the TUB family. In terms of tissue distribution, strongly expressed in testis. Also expressed in retina. Expressed in cancer cell lines.

It localises to the cytoplasm. The protein resides in the secreted. This Homo sapiens (Human) protein is Tubby-related protein 2 (TULP2).